We begin with the raw amino-acid sequence, 188 residues long: Photosystem I assembly protein Ycf4 (188 aa).

Helical transmembrane passes span 26–48 (MLWA…SSYF) and 68–90 (AALT…VFFL).

Belongs to the Ycf4 family.

It is found in the cellular thylakoid membrane. Its function is as follows. Seems to be required for the assembly of the photosystem I complex. This chain is Photosystem I assembly protein Ycf4, found in Picosynechococcus sp. (strain ATCC 27264 / PCC 7002 / PR-6) (Agmenellum quadruplicatum).